The sequence spans 366 residues: Cyclin-O protein A (366 aa).

Disordered stretches follow at residues A18–K55 and Y80–S99.

Belongs to the cyclin family.

The protein resides in the cytoplasm. Its function is as follows. Specifically required for generation of multiciliated cells, possibly by promoting a cell cycle state compatible with centriole amplification and maturation. Acts downstream of mcidas to promote mother centriole amplification and maturation in preparation for apical docking. In Xenopus laevis (African clawed frog), this protein is Cyclin-O protein A (ccno-a).